We begin with the raw amino-acid sequence, 392 residues long: ATP phosphoribosyltransferase regulatory subunit (392 aa).

The protein belongs to the class-II aminoacyl-tRNA synthetase family. HisZ subfamily. Heteromultimer composed of HisG and HisZ subunits.

The protein localises to the cytoplasm. It functions in the pathway amino-acid biosynthesis; L-histidine biosynthesis; L-histidine from 5-phospho-alpha-D-ribose 1-diphosphate: step 1/9. Its function is as follows. Required for the first step of histidine biosynthesis. May allow the feedback regulation of ATP phosphoribosyltransferase activity by histidine. This is ATP phosphoribosyltransferase regulatory subunit from Prochlorococcus marinus (strain MIT 9211).